The sequence spans 139 residues: D-ribose pyranase (139 aa).

The Proton donor role is filled by His20. Substrate-binding positions include Asp28, His106, and 128 to 130; that span reads YAN.

It belongs to the RbsD / FucU family. RbsD subfamily. In terms of assembly, homodecamer.

It localises to the cytoplasm. It catalyses the reaction beta-D-ribopyranose = beta-D-ribofuranose. It functions in the pathway carbohydrate metabolism; D-ribose degradation; D-ribose 5-phosphate from beta-D-ribopyranose: step 1/2. Catalyzes the interconversion of beta-pyran and beta-furan forms of D-ribose. This chain is D-ribose pyranase, found in Photorhabdus laumondii subsp. laumondii (strain DSM 15139 / CIP 105565 / TT01) (Photorhabdus luminescens subsp. laumondii).